The primary structure comprises 227 residues: ATP-dependent dethiobiotin synthetase BioD (227 aa).

An ATP-binding site is contributed by 13–18 (DIGKTY). Threonine 17 provides a ligand contact to Mg(2+). The active site involves lysine 38. Residue serine 42 participates in substrate binding. Residues aspartate 55, 116–119 (EGSG), and 179–180 (NN) each bind ATP. Aspartate 55 and glutamate 116 together coordinate Mg(2+).

It belongs to the dethiobiotin synthetase family. Homodimer. Requires Mg(2+) as cofactor.

The protein resides in the cytoplasm. It carries out the reaction (7R,8S)-7,8-diammoniononanoate + CO2 + ATP = (4R,5S)-dethiobiotin + ADP + phosphate + 3 H(+). It functions in the pathway cofactor biosynthesis; biotin biosynthesis; biotin from 7,8-diaminononanoate: step 1/2. Functionally, catalyzes a mechanistically unusual reaction, the ATP-dependent insertion of CO2 between the N7 and N8 nitrogen atoms of 7,8-diaminopelargonic acid (DAPA, also called 7,8-diammoniononanoate) to form a ureido ring. In Clostridium botulinum (strain Langeland / NCTC 10281 / Type F), this protein is ATP-dependent dethiobiotin synthetase BioD.